The primary structure comprises 421 residues: Serine protease HTRA2, mitochondrial (421 aa).

The chain crosses the membrane as a helical span at residues 63–81; that stretch reads VIRFFVPFSLGALASTMVA. The IAP-binding motif lies at 74–77; that stretch reads ALAS. The segment at 138-301 is serine protease; sequence SNGSGFVIEQ…IPIDYVKVFL (164 aa). Active-site charge relay system residues include His156, Asp188, and Ser265. Positions 324-409 constitute a PDZ domain; that stretch reads MGITMLTLTP…ELDIVILRGV (86 aa).

This sequence belongs to the peptidase S1C family. Interacts with th/DIAP1 (via BIR 2 domain).

Its subcellular location is the mitochondrion intermembrane space. It localises to the mitochondrion membrane. It catalyses the reaction Cleavage of non-polar aliphatic amino-acids at the P1 position, with a preference for Val, Ile and Met. At the P2 and P3 positions, Arg is selected most strongly with a secondary preference for other hydrophilic residues.. Functionally, serine protease that shows proteolytic activity against a non-specific substrate beta-casein. Promotes or induces cell death either by direct binding to and inhibition of BIRC proteins (also called inhibitor of apoptosis proteins, IAPs), leading to an increase in caspase activity, or by a BIRC inhibition-independent, caspase-independent and serine protease activity-dependent mechanism. Can antagonize antiapoptotic activity of th/Diap1 by directly inducing the degradation of th/Diap1. The polypeptide is Serine protease HTRA2, mitochondrial (Drosophila virilis (Fruit fly)).